The primary structure comprises 216 residues: Putative flagellar filament outer layer-like protein (216 aa).

The segment at 1–22 (MFAQDAAQTGEQTTQNQGENGN) is disordered. The segment covering 8–22 (QTGEQTTQNQGENGN) has biased composition (low complexity).

Its subcellular location is the periplasmic flagellum. It is found in the periplasm. Its function is as follows. Might be part of the flagella. This chain is Putative flagellar filament outer layer-like protein (flaAL), found in Brachyspira hyodysenteriae (strain ATCC 49526 / WA1).